A 253-amino-acid chain; its full sequence is Ribonuclease PH (253 aa).

Phosphate contacts are provided by residues arginine 86 and 124–126 (GTR).

This sequence belongs to the RNase PH family. In terms of assembly, homohexameric ring arranged as a trimer of dimers.

The catalysed reaction is tRNA(n+1) + phosphate = tRNA(n) + a ribonucleoside 5'-diphosphate. In terms of biological role, phosphorolytic 3'-5' exoribonuclease that plays an important role in tRNA 3'-end maturation. Removes nucleotide residues following the 3'-CCA terminus of tRNAs; can also add nucleotides to the ends of RNA molecules by using nucleoside diphosphates as substrates, but this may not be physiologically important. Probably plays a role in initiation of 16S rRNA degradation (leading to ribosome degradation) during starvation. The polypeptide is Ribonuclease PH (Brevibacillus brevis (strain 47 / JCM 6285 / NBRC 100599)).